Consider the following 244-residue polypeptide: MNEKNIKHSQNFITSKHNIDKIMTNIRLNEHDNIFEIGSGKGHFTLELVKRCNFVTAIEIDHKLCKTTENKLVDHDNFQVLNKDILQFKFPKNQSYKIYGNIPYNISTDIIRKIVFDSIANEIYLIVEYGFAKRLLNTKRSLALLLMAEVDISILSMVPREYFHPKPKVNSSLIRLSRKKSRISHKDKQKYNYFVMKWVNKEYKKIFTKNQFNNSLKHAGIDDLNNISFEQFLSLFNSYKLFNK.

S-adenosyl-L-methionine contacts are provided by asparagine 11, isoleucine 13, glycine 38, glutamate 59, aspartate 84, and asparagine 101.

This sequence belongs to the class I-like SAM-binding methyltransferase superfamily. rRNA adenine N(6)-methyltransferase family.

It catalyses the reaction adenosine(2085) in 23S rRNA + 2 S-adenosyl-L-methionine = N(6)-dimethyladenosine(2085) in 23S rRNA + 2 S-adenosyl-L-homocysteine + 2 H(+). Its function is as follows. This protein produces a dimethylation of the adenine residue at position 2085 in 23S rRNA, resulting in reduced affinity between ribosomes and macrolide-lincosamide-streptogramin B antibiotics. In Staphylococcus aureus, this protein is rRNA adenine N-6-methyltransferase (ermC).